An 89-amino-acid polypeptide reads, in one-letter code: Putative defensin-like protein 254 (89 aa).

Residues 1–20 form the signal peptide; it reads MHNISFKLLLLCDLFLSSSS. 2 disulfide bridges follow: Cys-31–Cys-48 and Cys-37–Cys-55.

It belongs to the DEFL family.

It is found in the secreted. This Arabidopsis thaliana (Mouse-ear cress) protein is Putative defensin-like protein 254.